The primary structure comprises 163 residues: DNA endonuclease I-CreI (163 aa).

Gly19 and Asp20 together coordinate Mg(2+). Interaction with DNA regions lie at residues 26 to 38, 44 to 47, 68 to 70, and 138 to 143; these read QIKP…FKHQ, QVTQ, RDR, and SKTRKT.

This sequence belongs to the LAGLIDADG endonuclease family. As to quaternary structure, homodimer. It depends on Mg(2+) as a cofactor. Mn(2+) serves as cofactor. Co(2+) is required as a cofactor. The cofactor is Ni(2+). Requires Zn(2+) as cofactor.

Its subcellular location is the plastid. The protein localises to the chloroplast. Functionally, endonuclease involved in group I intron homing. Recognizes and cleaves a 19-24 bp palindromic DNA site. This is DNA endonuclease I-CreI from Chlamydomonas reinhardtii (Chlamydomonas smithii).